We begin with the raw amino-acid sequence, 752 residues long: MASIGSQVRKAASSIDPIVTDYAVGYFNHLSGITFDAVQSKQVDLSTEVQFVSDLLIDAGASKAKVKELSESILKQLTTQLKENEAKLELTGDTSKRLLDINVLKSHNSKSDINVSLSMLGVNGDIEHTGRKMETRVDLKKLAKAEQKIAKKVAKRNNKFVKYEASKLINDQKEEDYDSFFLQINPLEFGSSAGKSKDIHIDTFDLYVGDGQRILSNAQLTLSFGHRYGLVGQNGIGKSTLLRALSRRELNVPKHVSILHVEQELRGDDTKALQSVLDADVWRKQLLSEEAKINERLKEMDVLRQEFEEDSLEVKKLDNEREDLDNHLIQISDKLVDMESDKAEARAASILYGLGFSTEAQQQPTNSFSGGWRMRLSLARALFCQPDLLLLDEPSNMLDVPSIAYLAEYLKTYPNTVLTVSHDRAFLNEVATDIIYQHNERLDYYRGQDFDTFYTTKEERRKNAQREYDNQMVYRKHLQEFIDKYRYNAAKSQEAQSRIKKLEKLPVLEPPEQDKTIDFKFPECDKLSPPIIQLQDVSFGYDENNLLLKDVNLDVQMDSRIALVGANGCGKTTLLKIMMEQLRPLKGFVSRNPRLRIGYFTQHHVDSMDLTTSAVDWMSKSFPGKTDEEYRRHLGSFGITGTLGLQKMQLLSGGQKSRVAFAALCLNNPHILVLDEPSNHLDTTGLDALVEALKNFNGGVLMVSHDISVIDSVCKEIWVSEQGTVKRFEGTIYDYRDYILQSADAAGVVKKH.

Ala2 carries the post-translational modification N-acetylalanine. 2 ABC transporter domains span residues 199–464 (IHID…RKNA) and 532–748 (IQLQ…AAGV). ATP contacts are provided by residues 232–239 (GQNGIGKS) and 565–572 (GANGCGKT).

This sequence belongs to the ABC transporter superfamily. ABCF family. EF3 subfamily. In terms of assembly, interacts (via N-terminus) with GCN1 (via C-terminus); this interaction stimulates GCN2 kinase activity in response to amino acid starvation. The GCN1-GCN20 complex interacts with GCN2 on translating ribosomes in amino acid-starved cells; this association stimulates GCN2 kinase activation by uncharged tRNAs, and hence allowing GCN4 translational activation and derepression of amino acid biosynthetic genes. Associates with ribosomes.

Its function is as follows. Acts as a positive activator of the GCN2 protein kinase activity in response to in response to low amino acid, carbon, or purine availability. Component of the GCN1-GCN20 complex that forms a complex with GCN2 on translating ribosomes; during this process, GCN20 helps GCN1 to act as a chaperone to facilitate delivery of uncharged tRNAs that enter the A site of ribosomes to the tRNA-binding domain of GCN2, and hence stimulating GCN2 kinase activity. Participates in gene-specific mRNA translation activation, such as the transcriptional activator GCN4, by promoting the GCN2-mediated phosphorylation of eukaryotic translation initiation factor 2 (eIF-2-alpha/SUI2) on 'Ser-52', and hence allowing GCN4-mediated reprogramming of amino acid biosynthetic gene expression to alleviate nutrient depletion. The polypeptide is Protein GCN20 (Saccharomyces cerevisiae (strain ATCC 204508 / S288c) (Baker's yeast)).